Consider the following 525-residue polypeptide: Peptide chain release factor 3 (525 aa).

Residues 11-279 (DKRRTFAIIS…TYLEYAPQPA (269 aa)) enclose the tr-type G domain. Residues 20–27 (SHPDAGKT), 88–92 (DTPGH), and 142–145 (NKLD) contribute to the GTP site.

The protein belongs to the TRAFAC class translation factor GTPase superfamily. Classic translation factor GTPase family. PrfC subfamily.

It localises to the cytoplasm. Functionally, increases the formation of ribosomal termination complexes and stimulates activities of RF-1 and RF-2. It binds guanine nucleotides and has strong preference for UGA stop codons. It may interact directly with the ribosome. The stimulation of RF-1 and RF-2 is significantly reduced by GTP and GDP, but not by GMP. In Levilactobacillus brevis (strain ATCC 367 / BCRC 12310 / CIP 105137 / JCM 1170 / LMG 11437 / NCIMB 947 / NCTC 947) (Lactobacillus brevis), this protein is Peptide chain release factor 3.